Consider the following 187-residue polypeptide: Protein TIFY 3B (187 aa).

The span at 1–10 (MTKVKDEPRA) shows a compositional bias: basic and acidic residues. The segment at 1 to 50 (MTKVKDEPRASVEGGCGVADGDGGAAEIGGTGSVEKSINEVRSTEIQTAE) is disordered. Residues 14-32 (GGCGVADGDGGAAEIGGTG) are compositionally biased toward gly residues. The 36-residue stretch at 51–86 (PTVPPNQLTIFFGGSVTVFDGLPSEKVQEILRIAAK) folds into the Tify domain. The Jas signature appears at 139-163 (PIARRHSLQRFLEKRRDRLVNKNPY). The Nuclear localization signal signature appears at 141-148 (ARRHSLQR). Residues 152 to 187 (KRRDRLVNKNPYPTSDFKKTDVPTGNVSIKEEFPTA) are disordered.

Belongs to the TIFY/JAZ family. Interacts with MYC2, AFPH2/NINJA, TIFY10A/JAZ1, TIFY10B/JAZ2, TIFY11A/JAZ5, TIFY11B/JAZ6, TIFY5A/JAZ8 and TIFY9/JAZ10. In terms of assembly, (Microbial infection) Interacts with the pathogenic Pseudomonas syringae HopZ1a protein. Post-translationally, (Microbial infection) Acetylated by Pseudomonas syringae HopZ1a. Ubiquitinated. Targeted for degradation by the SCF(COI1) E3 ubiquitin ligase-proteasome pathway during jasmonate signaling.

It localises to the nucleus. In terms of biological role, repressor of jasmonate responses. The chain is Protein TIFY 3B from Arabidopsis thaliana (Mouse-ear cress).